Consider the following 93-residue polypeptide: uncharacterized protein (93 aa).

The disordered stretch occupies residues 73 to 93; sequence KWTVSGPVKQDTGKTDPAEKN. A compositionally biased stretch (basic and acidic residues) spans 83 to 93; sequence DTGKTDPAEKN.

This is an uncharacterized protein from Rhodobacter capsulatus (Rhodopseudomonas capsulata).